We begin with the raw amino-acid sequence, 369 residues long: Deoxyhypusine synthase (369 aa).

NAD(+)-binding positions include S105–S109, T131–G133, E137, and D238. E136 to E137 contacts spermidine. D243 serves as a coordination point for spermidine. G283 is a binding site for NAD(+). H288 lines the spermidine pocket. An NAD(+)-binding site is contributed by T308–A309. Spermidine contacts are provided by residues G314–D316 and E323–K329. Residue K329 is the Nucleophile of the active site. D342–A343 is a binding site for NAD(+).

It belongs to the deoxyhypusine synthase family. The cofactor is NAD(+).

The catalysed reaction is [eIF5A protein]-L-lysine + spermidine = [eIF5A protein]-deoxyhypusine + propane-1,3-diamine. Its pathway is protein modification; eIF5A hypusination. Catalyzes the NAD-dependent oxidative cleavage of spermidine and the subsequent transfer of the butylamine moiety of spermidine to the epsilon-amino group of a critical lysine residue of the eIF-5A precursor protein to form the intermediate deoxyhypusine residue. This is the first step of the post-translational modification of that lysine into an unusual amino acid residue named hypusine. Hypusination is unique to mature eIF-5A factor and is essential for its function. This chain is Deoxyhypusine synthase (Dhps), found in Rattus norvegicus (Rat).